A 340-amino-acid polypeptide reads, in one-letter code: Cobalt-precorrin-5B C(1)-methyltransferase (340 aa).

This sequence belongs to the CbiD family.

It carries out the reaction Co-precorrin-5B + S-adenosyl-L-methionine = Co-precorrin-6A + S-adenosyl-L-homocysteine. Its pathway is cofactor biosynthesis; adenosylcobalamin biosynthesis; cob(II)yrinate a,c-diamide from sirohydrochlorin (anaerobic route): step 6/10. In terms of biological role, catalyzes the methylation of C-1 in cobalt-precorrin-5B to form cobalt-precorrin-6A. The chain is Cobalt-precorrin-5B C(1)-methyltransferase from Pyrobaculum aerophilum (strain ATCC 51768 / DSM 7523 / JCM 9630 / CIP 104966 / NBRC 100827 / IM2).